Here is a 399-residue protein sequence, read N- to C-terminus: MAQRAFPNPYADYNKSLAEGYFDAAGRLTPEFSQRLTNKIRELLQQMERGLKSADPRDGTGYTGWAGIAVLYLHLYDVFGDPAYLQLAHGYVKQSLNCLTKRSITFLCGDAGPLAVAAVLYHKMNNEKQAEDCITRLIHLNKIDPHAPNEMLYGRIGYIYALLFVNKNFGVEKIPQSHIQQICETILTSGENLARKRNFTAKSPLMYEWYQEYYVGAAHGLAGIYYYLMQPSLQVSQGKLHSLVKPSVDYVCQLKFPSGNYPPCIGDNRDLLVHWCHGAPGVIYMLIQAYKVFREEKYLCDAYQCADVIWQYGLLKKGYGLCHGSAGNAYAFLTLYNLTQDMKYLYRACKFAEWCLEYGEHGCRTPDTPFSLFEGMAGTIYFLADLLVPTKARFPAFEL.

Residue Ala2 is modified to N-acetylalanine. At Lys142 the chain carries N6-acetyllysine. Position 276 (Cys276) interacts with Zn(2+). Residue Lys317 coordinates glutathione. Zn(2+)-binding residues include Cys322 and His323. 364–367 (RTPD) lines the glutathione pocket.

Belongs to the LanC-like protein family. Interacts with the C-terminal of STOM. Interacts with the EPS8 SH3 domain. Interaction with EPS8 is inhibited by glutathione binding. As to quaternary structure, (Microbial infection) Interacts with P.falciparum SBP1. Detected in erythrocytes, brain, kidney, testis, ovary, heart, lung, placenta and spleen (at protein level). Ubiquitous. Strongly expressed in brain, spinal cord, pituitary gland, kidney, heart, skeletal muscle, pancreas, ovary and testis.

Its subcellular location is the cytoplasm. It is found in the cell membrane. The catalysed reaction is RX + glutathione = an S-substituted glutathione + a halide anion + H(+). It catalyses the reaction 1-chloro-2,4-dinitrobenzene + glutathione = 2,4-dinitrophenyl-S-glutathione + chloride + H(+). Its function is as follows. Functions as a glutathione transferase. Catalyzes conjugation of the glutathione (GSH) to artificial substrates 1-chloro-2,4-dinitrobenzene (CDNB) and p-nitrophenyl acetate. Mitigates neuronal oxidative stress during normal postnatal development and in response to oxidative stresses probably through GSH antioxidant defense mechanism. May play a role in EPS8 signaling. Binds glutathione. This chain is Glutathione S-transferase LANCL1, found in Homo sapiens (Human).